Consider the following 97-residue polypeptide: uncharacterized protein (97 aa).

The region spanning 2–95 is the Stress-response A/B barrel domain; that stretch reads IRHLVLFKLN…EFATWVIADY (94 aa).

This is an uncharacterized protein from Streptomyces coelicolor (strain ATCC BAA-471 / A3(2) / M145).